A 277-amino-acid chain; its full sequence is Phosphatidylglycerol--prolipoprotein diacylglyceryl transferase (277 aa).

4 helical membrane passes run 22–42 (WYGV…LSEA), 51–71 (IIVD…RIYY), 89–109 (IWHG…TAII), and 116–136 (ISFW…QAIG). Arginine 137 is a binding site for a 1,2-diacyl-sn-glycero-3-phospho-(1'-sn-glycerol). The next 3 helical transmembrane spans lie at 177–197 (QPTF…LLII), 205–225 (GELF…IEGM), and 235–255 (FRVS…LIIY).

The protein belongs to the Lgt family.

The protein resides in the cell membrane. It catalyses the reaction L-cysteinyl-[prolipoprotein] + a 1,2-diacyl-sn-glycero-3-phospho-(1'-sn-glycerol) = an S-1,2-diacyl-sn-glyceryl-L-cysteinyl-[prolipoprotein] + sn-glycerol 1-phosphate + H(+). The protein operates within protein modification; lipoprotein biosynthesis (diacylglyceryl transfer). Catalyzes the transfer of the diacylglyceryl group from phosphatidylglycerol to the sulfhydryl group of the N-terminal cysteine of a prolipoprotein, the first step in the formation of mature lipoproteins. The protein is Phosphatidylglycerol--prolipoprotein diacylglyceryl transferase of Listeria welshimeri serovar 6b (strain ATCC 35897 / DSM 20650 / CCUG 15529 / CIP 8149 / NCTC 11857 / SLCC 5334 / V8).